The sequence spans 156 residues: MKVTLCVVGRLRAGPERDLINDYLQRFDRTGRGLGLGPASVVEVEDRKGGGKAAEADLLRKAVPRGAVICALDERGKTMSSPQFADSLAGWRDAGRSDLAFLIGGADGLDKALRAQAEARLSFGAMVWPHMLARVMLAEQLYRAAAILAGTPYHRV.

S-adenosyl-L-methionine-binding positions include Leu72, Gly104, and 123–128 (FGAMVW).

It belongs to the RNA methyltransferase RlmH family. In terms of assembly, homodimer.

The protein resides in the cytoplasm. The catalysed reaction is pseudouridine(1915) in 23S rRNA + S-adenosyl-L-methionine = N(3)-methylpseudouridine(1915) in 23S rRNA + S-adenosyl-L-homocysteine + H(+). Functionally, specifically methylates the pseudouridine at position 1915 (m3Psi1915) in 23S rRNA. This Dinoroseobacter shibae (strain DSM 16493 / NCIMB 14021 / DFL 12) protein is Ribosomal RNA large subunit methyltransferase H.